Here is a 322-residue protein sequence, read N- to C-terminus: Breast cancer metastasis-suppressor 1-like protein (322 aa).

The segment covering 1–16 has biased composition (basic and acidic residues); that stretch reads MPVHSREKKESNHNDM. Positions 1–56 are disordered; sequence MPVHSREKKESNHNDMEVDYPENEGSSSEEDDSDSSSGSEEGDSSEMDDEDCERRR. Residues 17 to 51 are compositionally biased toward acidic residues; the sequence is EVDYPENEGSSSEEDDSDSSSGSEEGDSSEMDDED. Coiled-coil stretches lie at residues 50–99 and 147–178; these read EDCE…QAQE and EKLLLYDTVQSELEEKIRRLEEDRHSIDITSE.

Belongs to the BRMS1 family.

The protein resides in the nucleus. Its function is as follows. Involved in the histone deacetylase (HDAC1)-dependent transcriptional repression activity. In Xenopus laevis (African clawed frog), this protein is Breast cancer metastasis-suppressor 1-like protein (brms1l).